Reading from the N-terminus, the 428-residue chain is Gamma-glutamyl phosphate reductase (428 aa).

This sequence belongs to the gamma-glutamyl phosphate reductase family.

The protein localises to the cytoplasm. The enzyme catalyses L-glutamate 5-semialdehyde + phosphate + NADP(+) = L-glutamyl 5-phosphate + NADPH + H(+). Its pathway is amino-acid biosynthesis; L-proline biosynthesis; L-glutamate 5-semialdehyde from L-glutamate: step 2/2. Catalyzes the NADPH-dependent reduction of L-glutamate 5-phosphate into L-glutamate 5-semialdehyde and phosphate. The product spontaneously undergoes cyclization to form 1-pyrroline-5-carboxylate. The chain is Gamma-glutamyl phosphate reductase from Zymomonas mobilis subsp. mobilis (strain ATCC 31821 / ZM4 / CP4).